Here is a 298-residue protein sequence, read N- to C-terminus: Glutamyl-Q tRNA(Asp) synthetase (298 aa).

L-glutamate contacts are provided by residues 8–12 and glutamate 44; that span reads RFAPS. The 'HIGH' region signature appears at 11-21; sequence PSPTGPLHFGS. 4 residues coordinate Zn(2+): cysteine 100, cysteine 102, tyrosine 123, and cysteine 127. Tyrosine 183 and arginine 201 together coordinate L-glutamate. A 'KMSKS' region motif is present at residues 239–243; sequence KLSKQ. Lysine 242 provides a ligand contact to ATP.

This sequence belongs to the class-I aminoacyl-tRNA synthetase family. GluQ subfamily. The cofactor is Zn(2+).

Its function is as follows. Catalyzes the tRNA-independent activation of glutamate in presence of ATP and the subsequent transfer of glutamate onto a tRNA(Asp). Glutamate is transferred on the 2-amino-5-(4,5-dihydroxy-2-cyclopenten-1-yl) moiety of the queuosine in the wobble position of the QUC anticodon. This is Glutamyl-Q tRNA(Asp) synthetase from Burkholderia cenocepacia (strain ATCC BAA-245 / DSM 16553 / LMG 16656 / NCTC 13227 / J2315 / CF5610) (Burkholderia cepacia (strain J2315)).